The chain runs to 90 residues: SAGA-associated factor 11 (90 aa).

The segment at 63–84 adopts an SGF11-type zinc-finger fold; that stretch reads FSCDNCGRKIAGGRFAQHINKC.

The protein belongs to the SGF11 family. In terms of assembly, component of the 1.8 MDa SAGA transcription coactivator-HAT complex. SAGA is built of 5 distinct domains with specialized functions. Within the SAGA complex, SUS1, SGF11, SGF73 and UBP8 form an additional subcomplex of SAGA called the DUB module (deubiquitination module). Interacts directly with SGF73, SUS1 and UBP8.

The protein localises to the nucleus. Its function is as follows. Functions as a component of the transcription regulatory histone acetylation (HAT) complex SAGA. At the promoters, SAGA is required for recruitment of the basal transcription machinery. It influences RNA polymerase II transcriptional activity through different activities such as TBP interaction and promoter selectivity, interaction with transcription activators, and chromatin modification through histone acetylation and deubiquitination. SAGA acetylates nucleosomal histone H3 to some extent (to form H3K9ac, H3K14ac, H3K18ac and H3K23ac). SAGA interacts with DNA via upstream activating sequences (UASs). Involved in transcriptional regulation of a subset of SAGA-regulated genes. Within the SAGA complex, participates in a subcomplex, that specifically deubiquitinates histones H2B. The chain is SAGA-associated factor 11 from Lodderomyces elongisporus (strain ATCC 11503 / CBS 2605 / JCM 1781 / NBRC 1676 / NRRL YB-4239) (Yeast).